A 159-amino-acid chain; its full sequence is SsrA-binding protein (159 aa).

Belongs to the SmpB family.

The protein localises to the cytoplasm. In terms of biological role, required for rescue of stalled ribosomes mediated by trans-translation. Binds to transfer-messenger RNA (tmRNA), required for stable association of tmRNA with ribosomes. tmRNA and SmpB together mimic tRNA shape, replacing the anticodon stem-loop with SmpB. tmRNA is encoded by the ssrA gene; the 2 termini fold to resemble tRNA(Ala) and it encodes a 'tag peptide', a short internal open reading frame. During trans-translation Ala-aminoacylated tmRNA acts like a tRNA, entering the A-site of stalled ribosomes, displacing the stalled mRNA. The ribosome then switches to translate the ORF on the tmRNA; the nascent peptide is terminated with the 'tag peptide' encoded by the tmRNA and targeted for degradation. The ribosome is freed to recommence translation, which seems to be the essential function of trans-translation. In Bifidobacterium adolescentis (strain ATCC 15703 / DSM 20083 / NCTC 11814 / E194a), this protein is SsrA-binding protein.